The chain runs to 489 residues: FK506-binding protein 4 (489 aa).

Disordered regions lie at residues proline 40 to leucine 157 and glycine 199 to threonine 378. Residues methionine 66–isoleucine 88 show a composition bias toward acidic residues. Residues serine 93–glutamate 109 are compositionally biased toward basic and acidic residues. Acidic residues-rich tracts occupy residues leucine 110–asparagine 125, threonine 143–leucine 157, and glycine 208–aspartate 250. 3 stretches are compositionally biased toward basic and acidic residues: residues alanine 267–aspartate 282, methionine 292–aspartate 303, and glutamate 328–lysine 353. Residues glutamine 362–threonine 378 show a composition bias toward polar residues. The 84-residue stretch at valine 406–lysine 489 folds into the PPIase FKBP-type domain.

The protein belongs to the FKBP-type PPIase family. FKBP3/4 subfamily. As to quaternary structure, binds to histones H3 and H4.

The protein localises to the nucleus. It carries out the reaction [protein]-peptidylproline (omega=180) = [protein]-peptidylproline (omega=0). With respect to regulation, inhibited by both FK506 and rapamycin. Its function is as follows. PPIase that acts as a histone chaperone. Histone proline isomerase that increases the rate of cis-trans isomerization at prolines on the histone H3 N-terminal tail. Proline isomerization influences H3 methylation thereby regulating gene expression. The chain is FK506-binding protein 4 (fpr4) from Aspergillus fumigatus (strain ATCC MYA-4609 / CBS 101355 / FGSC A1100 / Af293) (Neosartorya fumigata).